Reading from the N-terminus, the 592-residue chain is V-type ATP synthase alpha chain (592 aa).

Residue 233-240 (GPFGSGKT) participates in ATP binding.

This sequence belongs to the ATPase alpha/beta chains family.

The catalysed reaction is ATP + H2O + 4 H(+)(in) = ADP + phosphate + 5 H(+)(out). Produces ATP from ADP in the presence of a proton gradient across the membrane. The V-type alpha chain is a catalytic subunit. The polypeptide is V-type ATP synthase alpha chain (Clostridium botulinum (strain Loch Maree / Type A3)).